Here is a 116-residue protein sequence, read N- to C-terminus: Putative serine proteinase inhibitor 2 homolog first part (116 aa).

This sequence belongs to the serpin family. Poxviruses subfamily.

The protein is Putative serine proteinase inhibitor 2 homolog first part of Vaccinia virus (strain Copenhagen) (VACV).